The sequence spans 1298 residues: Major viral transcription factor ICP4 (1298 aa).

6 disordered regions span residues 1 to 82, 94 to 291, 534 to 554, 594 to 620, 718 to 826, and 877 to 904; these read MASE…VSPR, AVRT…PRRV, PASP…ADDD, AGAR…HADA, AASA…HTAA, and PAAQ…RLFG. Positions 11–23 are enriched in pro residues; the sequence is SPGPTDGPPPTPS. Residues 37–47 show a composition bias toward acidic residues; the sequence is ETEEGGDDPDH. Over residues 48-63 the composition is skewed to basic and acidic residues; it reads DPDHPHDLDDARRDGR. A compositionally biased stretch (pro residues) spans 100–110; the sequence is TPDPAASPPRT. Residues 116 to 127 are compositionally biased toward acidic residues; sequence DDDDGDEYDDAA. Residues 130 to 144 show a composition bias toward basic and acidic residues; the sequence is AGDRAPARGREREAP. A compositionally biased stretch (low complexity) spans 174-198; it reads RPSASSTSSDSGSSSSSSASSSSSS. Positions 199-209 are enriched in acidic residues; that stretch reads SDEDEDDDGND. Positions 210–219 are enriched in basic and acidic residues; it reads AADHAREARA. Low complexity predominate over residues 222–233; sequence RGPSSAAPAAPG. Residues 234–244 are compositionally biased toward pro residues; sequence RTPPPPGPPPL. 2 stretches are compositionally biased toward low complexity: residues 245-263 and 272-282; these read SEAA…ASAG and AAVAGRDATGR. A DNA-binding region spans residues 262–490; sequence AGRIERRRAR…ENAALTGAAG (229 aa). Basic and acidic residues predominate over residues 544–554; that stretch reads DAARHADADDD. Pro residues-rich tracts occupy residues 599–618 and 764–783; these read ASPP…PPHA and LPAP…PAQP. A compositionally biased stretch (low complexity) spans 784–802; sequence AAPRAAAAQARPRPVAVSR.

Belongs to the herpesviridae ICP4 family. As to quaternary structure, forms homodimers. Interacts with transcriptional regulator ICP27; this interaction is required for proper incorporation of ICP4 into virions. Interacts with host TBP and host TAF1; these interactions help the stabilization of the pre-nitiation complex on specific promoters. Interacts with host GTF2B. ADP-ribosylated. In terms of processing, the long stretch of Ser is a major site of phosphorylation. Only the phosphorylated forms are capable of interacting with beta or gamma genes.

The protein localises to the host nucleus. It localises to the host cytoplasm. Its subcellular location is the virion tegument. Functionally, plays an essential role in the regulation of viral gene expression by both activating and repressing host RNA polymerase II-mediated transcription. Binds with high affinity to the sequence 5'-ATCGTC-3'. Activates transcription by recruiting a form of the host TFIID to promoters and stabilizing the pre-initiation complex formation. Negatively regulates its own transcription. This immediate early (IE) protein is absolutely necessary for the transition from IE transcription to later viral gene transcription. The protein is Major viral transcription factor ICP4 (ICP4) of Human herpesvirus 1 (strain 17) (HHV-1).